We begin with the raw amino-acid sequence, 164 residues long: Peptidyl-prolyl cis-trans isomerase CYP18-2 (164 aa).

Residues 12-162 (VTLETSMGPF…HEVKILRTKV (151 aa)) form the PPIase cyclophilin-type domain.

The protein belongs to the cyclophilin-type PPIase family. As to expression, ubiquitous.

It localises to the cytoplasm. The catalysed reaction is [protein]-peptidylproline (omega=180) = [protein]-peptidylproline (omega=0). PPIases accelerate the folding of proteins. It catalyzes the cis-trans isomerization of proline imidic peptide bonds in oligopeptides. The chain is Peptidyl-prolyl cis-trans isomerase CYP18-2 (CYP18-2) from Arabidopsis thaliana (Mouse-ear cress).